Here is a 307-residue protein sequence, read N- to C-terminus: Voltage-dependent anion channel-forming protein alr2987 (307 aa).

4 consecutive transmembrane segments (helical) span residues 19 to 39, 47 to 67, 209 to 229, and 238 to 258; these read VIGA…LVTL, VSQP…LLVF, PLAY…LLPF, and WTGL…AIGL.

The protein belongs to the anion channel-forming bestrophin (TC 1.A.46) family.

It is found in the cell membrane. The polypeptide is Voltage-dependent anion channel-forming protein alr2987 (Nostoc sp. (strain PCC 7120 / SAG 25.82 / UTEX 2576)).